Consider the following 129-residue polypeptide: Fluoride-specific ion channel FluC 2 (129 aa).

4 consecutive transmembrane segments (helical) span residues 4-24 (LDVM…WWIG), 39-59 (TFLI…LFGV), 65-85 (YGTM…TTFS), and 100-120 (GGLA…AAWL). Gly79 and Thr82 together coordinate Na(+).

It belongs to the fluoride channel Fluc/FEX (TC 1.A.43) family.

The protein localises to the cell inner membrane. It catalyses the reaction fluoride(in) = fluoride(out). Na(+) is not transported, but it plays an essential structural role and its presence is essential for fluoride channel function. Functionally, fluoride-specific ion channel. Important for reducing fluoride concentration in the cell, thus reducing its toxicity. This Brucella suis biovar 1 (strain 1330) protein is Fluoride-specific ion channel FluC 2.